The following is a 388-amino-acid chain: F-box protein At5g42460 (388 aa).

Positions 1-47 constitute an F-box domain; the sequence is MTIMSDLPRDLLAEILSRVPLTSLRAVRLTCKKWNDLSKDRSFLKKQ.

The protein is F-box protein At5g42460 of Arabidopsis thaliana (Mouse-ear cress).